Consider the following 973-residue polypeptide: Vacuolar membrane protease (973 aa).

Residues 1–15 (MARQYSRTNPLGFTP) lie on the Cytoplasmic side of the membrane. Residues 16 to 36 (WPVTIITALVYLALVIPLLVV) traverse the membrane as a helical segment. At 37–383 (QHVVPSAPGS…STLAVFELHT (347 aa)) the chain is on the vacuolar side. 2 N-linked (GlcNAc...) asparagine glycosylation sites follow: N52 and N115. The Zn(2+) site is built by H167 and D179. E213 (proton acceptor) is an active-site residue. E214, E239, and H312 together coordinate Zn(2+). A helical transmembrane segment spans residues 384–404 (LFALSVTLLIVAPLVLLATSI). Residues 405 to 438 (ALVRADRMYLFRSTARVPGSDDFDEGVSLQGVRG) are Cytoplasmic-facing. Residues 439 to 459 (FFRFPFLLVIPTGVAVGLAYL) form a helical membrane-spanning segment. Topologically, residues 460 to 469 (VTKINPYIIH) are vacuolar. The chain crosses the membrane as a helical span at residues 470–490 (SSEYAVWSMMISAWVFLAWFV). The Cytoplasmic portion of the chain corresponds to 491–504 (SRVADFARPSAFHR). The helical transmembrane segment at 505 to 525 (VYVLTWMFVAEWVLLVIATVY) threads the bilayer. The Vacuolar portion of the chain corresponds to 526–529 (ENRY). The helical transmembrane segment at 530 to 550 (GLAGGYFVFFALSGTFLATWI) threads the bilayer. Residues 551–674 (SYLELFALPR…GLPKWTWVLQ (124 aa)) are Cytoplasmic-facing. Residues 572-623 (SRYASNHGSRLGTSSGEHGMDDAEDEEDDDGDDEDEARNVEEEPTESTSLLR) form a disordered region. Positions 574–587 (YASNHGSRLGTSSG) are enriched in polar residues. The segment covering 593–607 (DAEDEEDDDGDDEDE) has biased composition (acidic residues). Residues 675–695 (FLLSAPIVLILVGPLALLLTA) form a helical membrane-spanning segment. Residues 696-708 (ALRQTAQDGSSPL) are Vacuolar-facing. Residues 709–729 (FVYIAIAVLTTLLVTPLLPFI) traverse the membrane as a helical segment. At 730 to 735 (HRYTHH) the chain is on the cytoplasmic side. Residues 736–756 (IPLFLLLVFTGTLIYNLVAFP) form a helical membrane-spanning segment. Residues 757-973 (FSPSNRLKLF…LVEGSRRFEV (217 aa)) lie on the Vacuolar side of the membrane. N-linked (GlcNAc...) asparagine glycosylation is found at N803 and N839.

The protein belongs to the peptidase M28 family. Zn(2+) serves as cofactor.

The protein localises to the vacuole membrane. Functionally, may be involved in vacuolar sorting and osmoregulation. This chain is Vacuolar membrane protease, found in Aspergillus clavatus (strain ATCC 1007 / CBS 513.65 / DSM 816 / NCTC 3887 / NRRL 1 / QM 1276 / 107).